Consider the following 386-residue polypeptide: S-adenosylmethionine synthase (386 aa).

H16 is an ATP binding site. Residue D18 participates in Mg(2+) binding. E44 provides a ligand contact to K(+). The L-methionine site is built by E57 and Q100. The flexible loop stretch occupies residues Q100–E110. Residues D165–K167, D240, R246–K247, A263, and K267 each bind ATP. D240 is a binding site for L-methionine. K271 provides a ligand contact to L-methionine.

Belongs to the AdoMet synthase family. As to quaternary structure, homotetramer; dimer of dimers. The cofactor is Mg(2+). K(+) is required as a cofactor.

Its subcellular location is the cytoplasm. It catalyses the reaction L-methionine + ATP + H2O = S-adenosyl-L-methionine + phosphate + diphosphate. It participates in amino-acid biosynthesis; S-adenosyl-L-methionine biosynthesis; S-adenosyl-L-methionine from L-methionine: step 1/1. Functionally, catalyzes the formation of S-adenosylmethionine (AdoMet) from methionine and ATP. The overall synthetic reaction is composed of two sequential steps, AdoMet formation and the subsequent tripolyphosphate hydrolysis which occurs prior to release of AdoMet from the enzyme. The sequence is that of S-adenosylmethionine synthase from Hahella chejuensis (strain KCTC 2396).